The chain runs to 550 residues: Hydroxylamine reductase (550 aa).

The [2Fe-2S] cluster site is built by cysteine 3, cysteine 6, cysteine 18, and cysteine 25. Positions 249, 273, 317, 405, 433, 458, 492, and 494 each coordinate hybrid [4Fe-2O-2S] cluster. Residue cysteine 405 is modified to Cysteine persulfide.

It belongs to the HCP family. [2Fe-2S] cluster is required as a cofactor. Requires hybrid [4Fe-2O-2S] cluster as cofactor.

The protein resides in the cytoplasm. The enzyme catalyses A + NH4(+) + H2O = hydroxylamine + AH2 + H(+). Functionally, catalyzes the reduction of hydroxylamine to form NH(3) and H(2)O. This is Hydroxylamine reductase from Yersinia pseudotuberculosis serotype IB (strain PB1/+).